A 142-amino-acid polypeptide reads, in one-letter code: Large ribosomal subunit protein uL13 (142 aa).

It belongs to the universal ribosomal protein uL13 family. As to quaternary structure, part of the 50S ribosomal subunit.

Functionally, this protein is one of the early assembly proteins of the 50S ribosomal subunit, although it is not seen to bind rRNA by itself. It is important during the early stages of 50S assembly. In Shewanella baltica (strain OS223), this protein is Large ribosomal subunit protein uL13.